The chain runs to 423 residues: G protein-activated inward rectifier potassium channel 2 (423 aa).

At 1-89 the chain is on the cytoplasmic side; the sequence is MAKLTESMTN…IFTTLVDLKW (89 aa). Residues serine 16 and serine 23 each carry the phosphoserine modification. The chain crosses the membrane as a helical span at residues 90–114; it reads RFNLLIFVMVYTVTWLFFGMIWWLI. Topologically, residues 115–138 are extracellular; that stretch reads AYIRGDMDHIEDPSWTPCVTNLNG. The helical; Pore-forming intramembrane region spans 139-150; sequence FVSAFLFSIETE. Residues 151–157 constitute an intramembrane region (pore-forming); sequence TTIGYGY. The short motif at 152 to 157 is the Selectivity filter element; sequence TIGYGY. Topologically, residues 158-166 are extracellular; that stretch reads RVITDKCPE. A helical transmembrane segment spans residues 167 to 188; the sequence is GIILLLIQSVLGSIVNAFMVGC. The Cytoplasmic portion of the chain corresponds to 189-423; that stretch reads MFVKISQPKK…VANLENESKV (235 aa). The disordered stretch occupies residues 390–423; it reads NQHAELETEEEEKNLEEQTERNGDVANLENESKV. The short motif at 420-423 is the PDZ-binding element; the sequence is ESKV.

Belongs to the inward rectifier-type potassium channel (TC 1.A.2.1) family. KCNJ6 subfamily. As to quaternary structure, associates with KCNJ3/GIRK1 or KCNJ5/GRIK4 to form a G-protein-activated heteromultimer pore-forming unit. The resulting inward current is much larger. Interacts (via PDZ-binding motif) with SNX27 (via PDZ domain); the interaction is required when endocytosed to prevent degradation in lysosomes and promote recycling to the plasma membrane. Most abundant in cerebellum, and to a lesser degree in islets and exocrine pancreas.

The protein localises to the membrane. It carries out the reaction K(+)(in) = K(+)(out). Its activity is regulated as follows. Activated by phosphatidylinositol 4,5 biphosphate (PtdIns(4,5)P2). In terms of biological role, inward rectifier potassium channels are characterized by a greater tendency to allow potassium to flow into the cell rather than out of it. Their voltage dependence is regulated by the concentration of extracellular potassium; as external potassium is raised, the voltage range of the channel opening shifts to more positive voltages. The inward rectification is mainly due to the blockage of outward current by internal magnesium. This potassium channel may be involved in the regulation of insulin secretion by glucose and/or neurotransmitters acting through G-protein-coupled receptors. This chain is G protein-activated inward rectifier potassium channel 2 (KCNJ6), found in Homo sapiens (Human).